Here is a 571-residue protein sequence, read N- to C-terminus: Proline--tRNA ligase (571 aa).

The protein belongs to the class-II aminoacyl-tRNA synthetase family. ProS type 1 subfamily. Homodimer.

The protein resides in the cytoplasm. It catalyses the reaction tRNA(Pro) + L-proline + ATP = L-prolyl-tRNA(Pro) + AMP + diphosphate. Its function is as follows. Catalyzes the attachment of proline to tRNA(Pro) in a two-step reaction: proline is first activated by ATP to form Pro-AMP and then transferred to the acceptor end of tRNA(Pro). As ProRS can inadvertently accommodate and process non-cognate amino acids such as alanine and cysteine, to avoid such errors it has two additional distinct editing activities against alanine. One activity is designated as 'pretransfer' editing and involves the tRNA(Pro)-independent hydrolysis of activated Ala-AMP. The other activity is designated 'posttransfer' editing and involves deacylation of mischarged Ala-tRNA(Pro). The misacylated Cys-tRNA(Pro) is not edited by ProRS. In Ligilactobacillus salivarius (strain UCC118) (Lactobacillus salivarius), this protein is Proline--tRNA ligase.